The sequence spans 452 residues: Glutamyl-tRNA(Gln) amidotransferase subunit A (452 aa).

Catalysis depends on charge relay system residues Lys-56 and Ser-131. Ser-155 serves as the catalytic Acyl-ester intermediate.

Belongs to the amidase family. GatA subfamily. In terms of assembly, heterotrimer of A, B and C subunits.

It carries out the reaction L-glutamyl-tRNA(Gln) + L-glutamine + ATP + H2O = L-glutaminyl-tRNA(Gln) + L-glutamate + ADP + phosphate + H(+). Functionally, allows the formation of correctly charged Gln-tRNA(Gln) through the transamidation of misacylated Glu-tRNA(Gln) in organisms which lack glutaminyl-tRNA synthetase. The reaction takes place in the presence of glutamine and ATP through an activated gamma-phospho-Glu-tRNA(Gln). This is Glutamyl-tRNA(Gln) amidotransferase subunit A from Campylobacter curvus (strain 525.92).